We begin with the raw amino-acid sequence, 407 residues long: Tyrosine--tRNA ligase (407 aa).

Y35 provides a ligand contact to L-tyrosine. A 'HIGH' region motif is present at residues 40–49 (PTADSLHVGH). Positions 168 and 172 each coordinate L-tyrosine. Positions 228–232 (KMGKT) match the 'KMSKS' region motif. K231 contacts ATP. Residues 341-405 (NLLVDLLVKC…RGKKNFNRIV (65 aa)) form the S4 RNA-binding domain.

It belongs to the class-I aminoacyl-tRNA synthetase family. TyrS type 1 subfamily. As to quaternary structure, homodimer.

It localises to the cytoplasm. The catalysed reaction is tRNA(Tyr) + L-tyrosine + ATP = L-tyrosyl-tRNA(Tyr) + AMP + diphosphate + H(+). Functionally, catalyzes the attachment of tyrosine to tRNA(Tyr) in a two-step reaction: tyrosine is first activated by ATP to form Tyr-AMP and then transferred to the acceptor end of tRNA(Tyr). The polypeptide is Tyrosine--tRNA ligase (Clostridium botulinum (strain Kyoto / Type A2)).